Consider the following 899-residue polypeptide: Putative lipoxygenase 5 (899 aa).

3 disordered regions span residues 15–34 (AGSR…RSTA), 48–68 (APVE…SVAA), and 258–291 (VASA…SAES). The PLAT domain occupies 68–204 (ARAVVTVRRR…VSRDRRVFFS (137 aa)). Residues 207–899 (PYLPSETPPG…CRGVPNSVTI (693 aa)) enclose the Lipoxygenase domain. 5 residues coordinate Fe cation: His559, His564, His751, Asn755, and Ile899.

Belongs to the lipoxygenase family. Requires Fe cation as cofactor.

The catalysed reaction is (9Z,12Z)-octadecadienoate + O2 = (13S)-hydroperoxy-(9Z,11E)-octadecadienoate. The enzyme catalyses (9Z,12Z,15Z)-octadecatrienoate + O2 = (13S)-hydroperoxy-(9Z,11E,15Z)-octadecatrienoate. Its pathway is lipid metabolism; oxylipin biosynthesis. Functionally, plant lipoxygenase may be involved in a number of diverse aspects of plant physiology including growth and development, pest resistance, and senescence or responses to wounding. Catalyzes the hydroperoxidation of lipids containing a cis,cis-1,4-pentadiene structure. This Oryza sativa subsp. japonica (Rice) protein is Putative lipoxygenase 5.